A 242-amino-acid polypeptide reads, in one-letter code: MLNNGSSTPLYIQLKQIITDDIKKGVYSPTAKLPTENELCTKYNVSRITVRKAILDLVEEGYLIRQQGKGTFVKSPKLKRELIAVNGYSEFMESTGKKPKHHVLSHDIIPASKPIAEKLQIQPESPVVELKRILYNDDQPLTFEVTHYPLDLFPGIDTFIADGVSMHDILKQQYKVVPTHNTKLLNVVYAQQEESKYLDCDIGDALFEIDKTAFTSNDQPIYCSLFLMHTNRVTFTINSPYT.

Residues 8–76 form the HTH gntR-type domain; sequence TPLYIQLKQI…QGKGTFVKSP (69 aa). A DNA-binding region (H-T-H motif) is located at residues 36–55; sequence ENELCTKYNVSRITVRKAIL.

This is an uncharacterized protein from Bacillus subtilis (strain 168).